The sequence spans 256 residues: Thiazole synthase (256 aa).

Lys-95 (schiff-base intermediate with DXP) is an active-site residue. Residues Gly-156, Ala-182–Gly-183, and Asn-204–Thr-205 contribute to the 1-deoxy-D-xylulose 5-phosphate site.

It belongs to the ThiG family. As to quaternary structure, homotetramer. Forms heterodimers with either ThiH or ThiS.

The protein localises to the cytoplasm. It carries out the reaction [ThiS sulfur-carrier protein]-C-terminal-Gly-aminoethanethioate + 2-iminoacetate + 1-deoxy-D-xylulose 5-phosphate = [ThiS sulfur-carrier protein]-C-terminal Gly-Gly + 2-[(2R,5Z)-2-carboxy-4-methylthiazol-5(2H)-ylidene]ethyl phosphate + 2 H2O + H(+). It functions in the pathway cofactor biosynthesis; thiamine diphosphate biosynthesis. In terms of biological role, catalyzes the rearrangement of 1-deoxy-D-xylulose 5-phosphate (DXP) to produce the thiazole phosphate moiety of thiamine. Sulfur is provided by the thiocarboxylate moiety of the carrier protein ThiS. In vitro, sulfur can be provided by H(2)S. This Escherichia coli O127:H6 (strain E2348/69 / EPEC) protein is Thiazole synthase.